The sequence spans 245 residues: uncharacterized protein (245 aa).

To M.tuberculosis Rv2927c.

This is an uncharacterized protein from Mycobacterium leprae (strain TN).